Consider the following 321-residue polypeptide: Endochitinase 1 (321 aa).

The N-terminal stretch at 1–21 (MSFRALSVFSLFLSYLILGSA) is a signal peptide. The Chitin-binding type-1 domain maps to 22–64 (EQCGRQAGGALCPGGLCCSQFGWCGNTDDYCKKENGCQSQCSG). 7 disulfide bridges follow: cysteine 24/cysteine 39, cysteine 33/cysteine 45, cysteine 38/cysteine 52, cysteine 58/cysteine 62, cysteine 93/cysteine 156, cysteine 167/cysteine 175, and cysteine 274/cysteine 306. Residues 65-98 (SGGDTGGLDSLITRERFDQMLLHRNDGGCPARGF) are hinge. Residues 99–321 (YTYDAFIAAA…YNNGPSVDSM (223 aa)) are catalytic. Glutamate 137 functions as the Proton donor in the catalytic mechanism.

The protein belongs to the glycosyl hydrolase 19 family. Chitinase class I subfamily.

It localises to the vacuole. It carries out the reaction Random endo-hydrolysis of N-acetyl-beta-D-glucosaminide (1-&gt;4)-beta-linkages in chitin and chitodextrins.. Functionally, defense against chitin-containing fungal pathogens. This chain is Endochitinase 1 (CHIA1), found in Theobroma cacao (Cacao).